The following is an 82-amino-acid chain: Small ribosomal subunit protein uS17 (82 aa).

This sequence belongs to the universal ribosomal protein uS17 family. As to quaternary structure, part of the 30S ribosomal subunit.

Functionally, one of the primary rRNA binding proteins, it binds specifically to the 5'-end of 16S ribosomal RNA. The chain is Small ribosomal subunit protein uS17 from Xanthobacter autotrophicus (strain ATCC BAA-1158 / Py2).